The following is a 212-amino-acid chain: Sentrin-specific protease 8 (212 aa).

M1 bears the N-acetylmethionine mark. Positions 11-174 (SLLRQSDVSL…MYVICNTEAL (164 aa)) are protease. Residues H102 and D119 contribute to the active site. C163 serves as the catalytic Nucleophile.

The protein belongs to the peptidase C48 family. As to expression, broadly expressed, with highest levels in kidney and pancreas.

Functionally, protease that catalyzes two essential functions in the NEDD8 pathway: processing of full-length NEDD8 to its mature form and deconjugation of NEDD8 from targeted proteins such as cullins or p53. In Homo sapiens (Human), this protein is Sentrin-specific protease 8 (SENP8).